The sequence spans 250 residues: Putative inner dynein arm light chain, axonemal (250 aa).

Residues 168–250 (MRKALQAHEE…QLEGITAPKK (83 aa)) adopt a coiled-coil conformation.

Belongs to the inner dynein arm light chain family.

The protein localises to the cell projection. It is found in the cilium. The protein resides in the dynein axonemal particle. Functionally, may play a dynamic role in flagellar motility. This is Putative inner dynein arm light chain, axonemal from Drosophila melanogaster (Fruit fly).